Reading from the N-terminus, the 152-residue chain is Deoxyuridine 5'-triphosphate nucleotidohydrolase (152 aa).

Substrate contacts are provided by residues 71-73 (RSG), N84, 88-90 (LID), and M98.

This sequence belongs to the dUTPase family. Mg(2+) is required as a cofactor.

It catalyses the reaction dUTP + H2O = dUMP + diphosphate + H(+). It participates in pyrimidine metabolism; dUMP biosynthesis; dUMP from dCTP (dUTP route): step 2/2. Functionally, this enzyme is involved in nucleotide metabolism: it produces dUMP, the immediate precursor of thymidine nucleotides and it decreases the intracellular concentration of dUTP so that uracil cannot be incorporated into DNA. The chain is Deoxyuridine 5'-triphosphate nucleotidohydrolase from Shewanella denitrificans (strain OS217 / ATCC BAA-1090 / DSM 15013).